The chain runs to 175 residues: uncharacterized protein (175 aa).

Residues 10–157 form the HTH marR-type domain; it reads LFELYAELIH…AERLFRDLVT (148 aa). Positions 68–91 form a DNA-binding region, H-T-H motif; that stretch reads VTSIAEKMNTTKATVSRISTKLLG.

It is found in the cytoplasm. This is an uncharacterized protein from Bacillus subtilis (strain 168).